The following is a 33-amino-acid chain: Photosystem II reaction center protein Psb30 (33 aa).

The helical transmembrane segment at Val-5–Leu-25 threads the bilayer.

Belongs to the Psb30/Ycf12 family. As to quaternary structure, PSII is composed of 1 copy each of membrane proteins PsbA, PsbB, PsbC, PsbD, PsbE, PsbF, PsbH, PsbI, PsbJ, PsbK, PsbL, PsbM, PsbT, PsbX, PsbY, PsbZ, Psb30/Ycf12, peripheral proteins of the oxygen-evolving complex and a large number of cofactors. It forms dimeric complexes.

It is found in the plastid. It localises to the chloroplast thylakoid membrane. In terms of biological role, a core subunit of photosystem II (PSII), probably helps stabilize the reaction center. This chain is Photosystem II reaction center protein Psb30, found in Physcomitrium patens (Spreading-leaved earth moss).